The chain runs to 301 residues: Phosphatidylglycerol--prolipoprotein diacylglyceryl transferase (301 aa).

Helical transmembrane passes span 17 to 37 (LAVR…IVVG), 59 to 79 (MLFY…VLFY), 97 to 117 (GGMS…LFAW), 129 to 149 (FVAP…FING), 203 to 223 (PSQL…LWLF), 230 to 250 (VGAA…TVEF), and 257 to 277 (FLGL…PMII). Arginine 142 is a binding site for a 1,2-diacyl-sn-glycero-3-phospho-(1'-sn-glycerol).

Belongs to the Lgt family.

Its subcellular location is the cell inner membrane. It catalyses the reaction L-cysteinyl-[prolipoprotein] + a 1,2-diacyl-sn-glycero-3-phospho-(1'-sn-glycerol) = an S-1,2-diacyl-sn-glyceryl-L-cysteinyl-[prolipoprotein] + sn-glycerol 1-phosphate + H(+). It participates in protein modification; lipoprotein biosynthesis (diacylglyceryl transfer). Functionally, catalyzes the transfer of the diacylglyceryl group from phosphatidylglycerol to the sulfhydryl group of the N-terminal cysteine of a prolipoprotein, the first step in the formation of mature lipoproteins. This Paraburkholderia phymatum (strain DSM 17167 / CIP 108236 / LMG 21445 / STM815) (Burkholderia phymatum) protein is Phosphatidylglycerol--prolipoprotein diacylglyceryl transferase.